The sequence spans 712 residues: Ribosome-releasing factor 2, mitochondrial (712 aa).

The N-terminal 28 residues, 1-28 (MQYSLLSAQLRCSRFLLRQQAPFINRCY), are a transit peptide targeting the mitochondrion. The region spanning 30 to 309 (DDIRNIGILA…AVNAYLPTPN (280 aa)) is the tr-type G domain. Residues 39–46 (AHIDAGKT), 103–107 (DTPGH), and 157–160 (NKMD) contribute to the GTP site.

This sequence belongs to the TRAFAC class translation factor GTPase superfamily. Classic translation factor GTPase family. EF-G/EF-2 subfamily.

It is found in the mitochondrion. Its function is as follows. Mitochondrial GTPase that mediates the disassembly of ribosomes from messenger RNA at the termination of mitochondrial protein biosynthesis. Not involved in the GTP-dependent ribosomal translocation step during translation elongation. The sequence is that of Ribosome-releasing factor 2, mitochondrial from Drosophila virilis (Fruit fly).